Here is a 382-residue protein sequence, read N- to C-terminus: Succinate--CoA ligase [ADP-forming] subunit beta (382 aa).

One can recognise an ATP-grasp domain in the interval 9–240 (KELFLRYGVK…PRDITEFEAY (232 aa)). ATP contacts are provided by residues K45, 52 to 54 (GRG), V94, and E99. Residues N193 and D207 each contribute to the Mg(2+) site. Substrate-binding positions include N260 and 317-319 (GIT).

It belongs to the succinate/malate CoA ligase beta subunit family. Heterotetramer of two alpha and two beta subunits. Requires Mg(2+) as cofactor.

The enzyme catalyses succinate + ATP + CoA = succinyl-CoA + ADP + phosphate. It catalyses the reaction GTP + succinate + CoA = succinyl-CoA + GDP + phosphate. Its pathway is carbohydrate metabolism; tricarboxylic acid cycle; succinate from succinyl-CoA (ligase route): step 1/1. Succinyl-CoA synthetase functions in the citric acid cycle (TCA), coupling the hydrolysis of succinyl-CoA to the synthesis of either ATP or GTP and thus represents the only step of substrate-level phosphorylation in the TCA. The beta subunit provides nucleotide specificity of the enzyme and binds the substrate succinate, while the binding sites for coenzyme A and phosphate are found in the alpha subunit. The protein is Succinate--CoA ligase [ADP-forming] subunit beta of Pyrobaculum islandicum (strain DSM 4184 / JCM 9189 / GEO3).